Consider the following 525-residue polypeptide: Probable malate:quinone oxidoreductase (525 aa).

The protein belongs to the MQO family. It depends on FAD as a cofactor.

It carries out the reaction (S)-malate + a quinone = a quinol + oxaloacetate. Its pathway is carbohydrate metabolism; tricarboxylic acid cycle; oxaloacetate from (S)-malate (quinone route): step 1/1. In Serratia proteamaculans (strain 568), this protein is Probable malate:quinone oxidoreductase.